Here is a 541-residue protein sequence, read N- to C-terminus: Chaperonin GroEL 1 (541 aa).

Residues 29–32, 86–90, Gly413, 478–480, and Asp494 contribute to the ATP site; these read TLGP, DGTTT, and NAA. The segment at 520–541 is disordered; the sequence is VVEKPAEAEDDGHGHGHGHHHH. Positions 523–533 are enriched in basic and acidic residues; sequence KPAEAEDDGHG.

The protein belongs to the chaperonin (HSP60) family. As to quaternary structure, forms a cylinder of 14 subunits composed of two heptameric rings stacked back-to-back. Interacts with the co-chaperonin GroES.

It is found in the cytoplasm. The enzyme catalyses ATP + H2O + a folded polypeptide = ADP + phosphate + an unfolded polypeptide.. Together with its co-chaperonin GroES, plays an essential role in assisting protein folding. The GroEL-GroES system forms a nano-cage that allows encapsulation of the non-native substrate proteins and provides a physical environment optimized to promote and accelerate protein folding. The chain is Chaperonin GroEL 1 from Mycolicibacterium gilvum (strain PYR-GCK) (Mycobacterium gilvum (strain PYR-GCK)).